The chain runs to 75 residues: Small ribosomal subunit protein bS21B (75 aa).

Over residues 33 to 52 (RRSYEKPSERRAREKAEAVR) the composition is skewed to basic and acidic residues. Residues 33–75 (RRSYEKPSERRAREKAEAVRRARKLARKQAQREGLLPGKKRAA) are disordered.

This sequence belongs to the bacterial ribosomal protein bS21 family.

The polypeptide is Small ribosomal subunit protein bS21B (Chelativorans sp. (strain BNC1)).